A 90-amino-acid chain; its full sequence is Probable Fe(2+)-trafficking protein (90 aa).

This sequence belongs to the Fe(2+)-trafficking protein family.

In terms of biological role, could be a mediator in iron transactions between iron acquisition and iron-requiring processes, such as synthesis and/or repair of Fe-S clusters in biosynthetic enzymes. The polypeptide is Probable Fe(2+)-trafficking protein (Xylella fastidiosa (strain 9a5c)).